A 173-amino-acid chain; its full sequence is Co-chaperone protein HscB homolog (173 aa).

The J domain maps to Cys-5–Leu-77.

It belongs to the HscB family. As to quaternary structure, interacts with HscA and stimulates its ATPase activity.

Co-chaperone involved in the maturation of iron-sulfur cluster-containing proteins. Seems to help targeting proteins to be folded toward HscA. In Ectopseudomonas mendocina (strain ymp) (Pseudomonas mendocina), this protein is Co-chaperone protein HscB homolog.